The chain runs to 201 residues: MQHAYDEHLATNRYFDRKFGLEAAKILPGEYYVANQEALLVTVLGSCVAACIRDADSGIGGMNHFMLPDDGGRDKVGMSARYGTYAMEVLINHLLKLGARRNRFEAKVFGGGAVLASLASSNVGARNAEFVLDFLKTEKIPVVAKDLLDSYPRKVYYFPYSGKVLVKKLHRVHNDTLFSRENDYKVRLSGAPMDGDIELFI.

The protein belongs to the CheD family.

The enzyme catalyses L-glutaminyl-[protein] + H2O = L-glutamyl-[protein] + NH4(+). In terms of biological role, probably deamidates glutamine residues to glutamate on methyl-accepting chemotaxis receptors (MCPs), playing an important role in chemotaxis. The sequence is that of Probable chemoreceptor glutamine deamidase CheD 1 from Dechloromonas aromatica (strain RCB).